The primary structure comprises 74 residues: Acyl carrier protein (74 aa).

One can recognise a Carrier domain in the interval 1 to 73; that stretch reads MAVFEKVQEI…DLVAYVEEQA (73 aa). S35 carries the post-translational modification O-(pantetheine 4'-phosphoryl)serine.

Belongs to the acyl carrier protein (ACP) family. 4'-phosphopantetheine is transferred from CoA to a specific serine of apo-ACP by AcpS. This modification is essential for activity because fatty acids are bound in thioester linkage to the sulfhydryl of the prosthetic group.

It is found in the cytoplasm. It functions in the pathway lipid metabolism; fatty acid biosynthesis. Functionally, carrier of the growing fatty acid chain in fatty acid biosynthesis. The polypeptide is Acyl carrier protein (Streptococcus pneumoniae serotype 4 (strain ATCC BAA-334 / TIGR4)).